The sequence spans 381 residues: Queuine tRNA-ribosyltransferase (381 aa).

Asp-92 acts as the Proton acceptor in catalysis. Residues 92–96 (DSGGF), Asp-146, Gln-190, and Gly-217 each bind substrate. Residues 248 to 254 (GVGRPED) form an RNA binding region. Asp-267 acts as the Nucleophile in catalysis. Residues 272 to 276 (TRNAR) form an RNA binding; important for wobble base 34 recognition region. Cys-305, Cys-307, Cys-310, and His-337 together coordinate Zn(2+).

The protein belongs to the queuine tRNA-ribosyltransferase family. In terms of assembly, homodimer. Within each dimer, one monomer is responsible for RNA recognition and catalysis, while the other monomer binds to the replacement base PreQ1. Requires Zn(2+) as cofactor.

The catalysed reaction is 7-aminomethyl-7-carbaguanine + guanosine(34) in tRNA = 7-aminomethyl-7-carbaguanosine(34) in tRNA + guanine. The protein operates within tRNA modification; tRNA-queuosine biosynthesis. In terms of biological role, catalyzes the base-exchange of a guanine (G) residue with the queuine precursor 7-aminomethyl-7-deazaguanine (PreQ1) at position 34 (anticodon wobble position) in tRNAs with GU(N) anticodons (tRNA-Asp, -Asn, -His and -Tyr). Catalysis occurs through a double-displacement mechanism. The nucleophile active site attacks the C1' of nucleotide 34 to detach the guanine base from the RNA, forming a covalent enzyme-RNA intermediate. The proton acceptor active site deprotonates the incoming PreQ1, allowing a nucleophilic attack on the C1' of the ribose to form the product. After dissociation, two additional enzymatic reactions on the tRNA convert PreQ1 to queuine (Q), resulting in the hypermodified nucleoside queuosine (7-(((4,5-cis-dihydroxy-2-cyclopenten-1-yl)amino)methyl)-7-deazaguanosine). The chain is Queuine tRNA-ribosyltransferase from Xanthomonas euvesicatoria pv. vesicatoria (strain 85-10) (Xanthomonas campestris pv. vesicatoria).